The following is a 490-amino-acid chain: uncharacterized protein (490 aa).

The signal sequence occupies residues 1–19 (MSITSVSLYVYLICAGGHA).

This sequence belongs to the mimivirus L137 family.

This is an uncharacterized protein from Acanthamoeba polyphaga (Amoeba).